Consider the following 79-residue polypeptide: Sec-independent protein translocase protein TatA (79 aa).

A helical membrane pass occupies residues 1 to 21; it reads MGGWSSPSHWLIILLIVVLLF. Over residues 49 to 61 the composition is skewed to basic and acidic residues; it reads EVAKNTQKIEENK. The disordered stretch occupies residues 49 to 79; sequence EVAKNTQKIEENKNTTNNTNADASIDETKKA.

It belongs to the TatA/E family. As to quaternary structure, the Tat system comprises two distinct complexes: a TatABC complex, containing multiple copies of TatA, TatB and TatC subunits, and a separate TatA complex, containing only TatA subunits. Substrates initially bind to the TatABC complex, which probably triggers association of the separate TatA complex to form the active translocon.

It localises to the cell inner membrane. Its function is as follows. Part of the twin-arginine translocation (Tat) system that transports large folded proteins containing a characteristic twin-arginine motif in their signal peptide across membranes. TatA could form the protein-conducting channel of the Tat system. The protein is Sec-independent protein translocase protein TatA of Campylobacter jejuni subsp. doylei (strain ATCC BAA-1458 / RM4099 / 269.97).